The following is a 126-amino-acid chain: Large ribosomal subunit protein bL12 (126 aa).

This sequence belongs to the bacterial ribosomal protein bL12 family. Homodimer. Part of the ribosomal stalk of the 50S ribosomal subunit. Forms a multimeric L10(L12)X complex, where L10 forms an elongated spine to which 2 to 4 L12 dimers bind in a sequential fashion. Binds GTP-bound translation factors.

Forms part of the ribosomal stalk which helps the ribosome interact with GTP-bound translation factors. Is thus essential for accurate translation. The protein is Large ribosomal subunit protein bL12 of Chlorobium phaeobacteroides (strain BS1).